We begin with the raw amino-acid sequence, 360 residues long: Spermidine/putrescine-binding periplasmic protein 1 (360 aa).

Positions 1–16 are cleaved as a signal peptide; the sequence is MKKFAGLITASFVAAT.

It belongs to the bacterial solute-binding protein PotD/PotF family.

The protein localises to the periplasm. In terms of biological role, required for the activity of the bacterial periplasmic transport system of putrescine and spermidine. Polyamine binding protein. The chain is Spermidine/putrescine-binding periplasmic protein 1 (potD-B) from Haemophilus influenzae (strain ATCC 51907 / DSM 11121 / KW20 / Rd).